The sequence spans 629 residues: Nicotinic receptor-associated protein 1 (629 aa).

C2 domains follow at residues 1–144 (MNQP…KAHL) and 162–299 (RTGS…ELLL). Asp-33, Asp-39, Asp-108, Asp-110, Asp-122, Asp-192, Asp-198, Asp-254, Asp-256, and Asp-274 together coordinate Ca(2+). The region spanning 342 to 561 (EFAVAVDFTA…LDPDVVQENL (220 aa)) is the VWFA domain. 2 disordered regions span residues 581–600 (GFQP…PPDY) and 607–629 (IGRR…PPMY).

This sequence belongs to the copine family. In terms of assembly, interacts with nicotinic acetylcholine receptor. The cofactor is Ca(2+).

The protein resides in the cell membrane. Its function is as follows. Exhibits calcium-dependent phospholipid binding properties. May function in membrane trafficking. Regulates synaptic levels of nicotinic acetylcholine receptor subunit lev-1 and unc-38 in the nerve cord. Involved in nicotinic acetylcholine receptor (nAChR)-mediated sensitivity to nicotine and levamisole. Affects directional sperm motility. The chain is Nicotinic receptor-associated protein 1 from Caenorhabditis briggsae.